A 418-amino-acid chain; its full sequence is Putative competence-damage inducible protein (418 aa).

The protein belongs to the CinA family.

The chain is Putative competence-damage inducible protein from Streptococcus pneumoniae (strain JJA).